Reading from the N-terminus, the 225-residue chain is 3-dehydroquinate dehydratase (225 aa).

3-dehydroquinate contacts are provided by residues 30-32 and Arg-62; that span reads EWR. His-118 serves as the catalytic Proton donor/acceptor. Lys-143 (schiff-base intermediate with substrate) is an active-site residue. 2 residues coordinate 3-dehydroquinate: Arg-186 and Gln-209.

The protein belongs to the type-I 3-dehydroquinase family. As to quaternary structure, homodimer.

It catalyses the reaction 3-dehydroquinate = 3-dehydroshikimate + H2O. It functions in the pathway metabolic intermediate biosynthesis; chorismate biosynthesis; chorismate from D-erythrose 4-phosphate and phosphoenolpyruvate: step 3/7. Functionally, involved in the third step of the chorismate pathway, which leads to the biosynthesis of aromatic amino acids. Catalyzes the cis-dehydration of 3-dehydroquinate (DHQ) and introduces the first double bond of the aromatic ring to yield 3-dehydroshikimate. The protein is 3-dehydroquinate dehydratase of Streptococcus agalactiae serotype Ia (strain ATCC 27591 / A909 / CDC SS700).